The chain runs to 542 residues: T-complex protein 1 subunit delta (542 aa).

The span at 1–16 (MPENVAPRTGPPAGAA) shows a compositional bias: low complexity. Positions 1–31 (MPENVAPRTGPPAGAAGAAGGRGKSAYQDRD) are disordered. Arginine 22 carries the omega-N-methylarginine modification. Lysine 24 is modified (N6-acetyllysine). Residue serine 39 is modified to Phosphoserine. Residue glycine 56 coordinates ADP. Glycine 56 contacts ATP. Aspartate 107 contributes to the Mg(2+) binding site. Residues glycine 108, threonine 109, threonine 110, serine 111, asparagine 175, serine 176, and lysine 177 each coordinate ADP. Residues glycine 108 and threonine 109 each coordinate ATP. ATP is bound at residue lysine 177. Serine 187 and serine 205 each carry phosphoserine. N6-acetyllysine is present on residues lysine 291, lysine 305, lysine 322, and lysine 329. Residue glycine 428 participates in ADP binding. Serine 447 carries the post-translational modification Phosphoserine. Residue glutamine 513 participates in ADP binding.

The protein belongs to the TCP-1 chaperonin family. In terms of assembly, component of the chaperonin-containing T-complex (TRiC), a hexadecamer composed of two identical back-to-back stacked rings enclosing a protein folding chamber. Each ring is made up of eight different subunits: TCP1/CCT1, CCT2, CCT3, CCT4, CCT5, CCT6A/CCT6, CCT7, CCT8. Interacts with PACRG. Interacts with DNAAF4. Interacts with DLEC1.

The protein localises to the cytoplasm. Its subcellular location is the melanosome. It localises to the cytoskeleton. The protein resides in the microtubule organizing center. It is found in the centrosome. The protein localises to the cilium basal body. It carries out the reaction ATP + H2O = ADP + phosphate + H(+). Component of the chaperonin-containing T-complex (TRiC), a molecular chaperone complex that assists the folding of actin, tubulin and other proteins upon ATP hydrolysis. The TRiC complex mediates the folding of WRAP53/TCAB1, thereby regulating telomere maintenance. As part of the TRiC complex may play a role in the assembly of BBSome, a complex involved in ciliogenesis regulating transports vesicles to the cilia. This chain is T-complex protein 1 subunit delta (CCT4), found in Bos taurus (Bovine).